Consider the following 176-residue polypeptide: MQCPFCQHTDSRVLESRSAEAGQSVRRRRECLQCNRRFTTYERIEFVPITVIKRNQDRELFDRSKLLKGVATACEKTGLTALQLESLVDDVEAELQQQAVREVTSTELGESVLTKLQSLSEVAYVRFASVYRQFRGIRDFVEALDQLKESGDGPLPSVLDEPYEDTAQPTIMISPQ.

The segment at 3 to 34 (CPFCQHTDSRVLESRSAEAGQSVRRRRECLQC) is a zinc-finger region. The ATP-cone domain occupies 49–139 (ITVIKRNQDR…VYRQFRGIRD (91 aa)). Residues 151–176 (GDGPLPSVLDEPYEDTAQPTIMISPQ) form a disordered region. Residues 167–176 (AQPTIMISPQ) are compositionally biased toward polar residues.

Belongs to the NrdR family. The cofactor is Zn(2+).

Its function is as follows. Negatively regulates transcription of bacterial ribonucleotide reductase nrd genes and operons by binding to NrdR-boxes. The protein is Transcriptional repressor NrdR of Acaryochloris marina (strain MBIC 11017).